The sequence spans 155 residues: 3-hydroxyacyl-[acyl-carrier-protein] dehydratase FabZ (155 aa).

Residue His61 is part of the active site.

This sequence belongs to the thioester dehydratase family. FabZ subfamily.

It localises to the cytoplasm. The enzyme catalyses a (3R)-hydroxyacyl-[ACP] = a (2E)-enoyl-[ACP] + H2O. In terms of biological role, involved in unsaturated fatty acids biosynthesis. Catalyzes the dehydration of short chain beta-hydroxyacyl-ACPs and long chain saturated and unsaturated beta-hydroxyacyl-ACPs. The protein is 3-hydroxyacyl-[acyl-carrier-protein] dehydratase FabZ of Synechococcus elongatus (strain ATCC 33912 / PCC 7942 / FACHB-805) (Anacystis nidulans R2).